Reading from the N-terminus, the 381-residue chain is Sulfate adenylyltransferase (381 aa).

It belongs to the sulfate adenylyltransferase family.

It catalyses the reaction sulfate + ATP + H(+) = adenosine 5'-phosphosulfate + diphosphate. It functions in the pathway sulfur metabolism; hydrogen sulfide biosynthesis; sulfite from sulfate: step 1/3. The sequence is that of Sulfate adenylyltransferase from Carboxydothermus hydrogenoformans (strain ATCC BAA-161 / DSM 6008 / Z-2901).